A 138-amino-acid polypeptide reads, in one-letter code: Sec-independent protein translocase protein TatB (138 aa).

The helical transmembrane segment at 2 to 18 (SFGEIIVILVVAILVLG) threads the bilayer. The interval 109 to 138 (NNLSGQNLNTEEKPNLSKLETQDKNGKINV) is disordered. Over residues 118-138 (TEEKPNLSKLETQDKNGKINV) the composition is skewed to basic and acidic residues.

The protein belongs to the TatB family. As to quaternary structure, the Tat system comprises two distinct complexes: a TatABC complex, containing multiple copies of TatA, TatB and TatC subunits, and a separate TatA complex, containing only TatA subunits. Substrates initially bind to the TatABC complex, which probably triggers association of the separate TatA complex to form the active translocon.

The protein resides in the cell inner membrane. Part of the twin-arginine translocation (Tat) system that transports large folded proteins containing a characteristic twin-arginine motif in their signal peptide across membranes. Together with TatC, TatB is part of a receptor directly interacting with Tat signal peptides. TatB may form an oligomeric binding site that transiently accommodates folded Tat precursor proteins before their translocation. The chain is Sec-independent protein translocase protein TatB from Campylobacter jejuni subsp. jejuni serotype O:2 (strain ATCC 700819 / NCTC 11168).